Consider the following 324-residue polypeptide: Archaeosine synthase subunit beta (324 aa).

The Radical SAM core domain maps to 12-254 (GKPGTALFII…LIWAKRKFPN (243 aa)). 3 residues coordinate [4Fe-4S] cluster: cysteine 27, cysteine 36, and cysteine 39.

This sequence belongs to the radical SAM superfamily. RaSEA family. Forms a robust complex with the archaeosine synthase alpha subunit ArcS, likely an alpha(2)beta(2) heterotetrameric structure. [4Fe-4S] cluster serves as cofactor.

The catalysed reaction is 7-N-[(5S)-5-amino-5-carboxypentyl]formamidino-7-deazaguanosine(15) in tRNA + S-adenosyl-L-methionine = archaeosine(15) in tRNA + L-1-piperideine-6-carboxylate + 5'-deoxyadenosine + L-methionine + 2 H(+). The protein operates within tRNA modification; archaeosine-tRNA biosynthesis. Radical SAM enzyme involved in the synthesis of archaeosine, a modified nucleoside present in the dihydrouridine loop (D-loop) of archaeal tRNAs. Catalyzes the cleavage of the C(epsilon)-N bond of the lysine moiety of q0kN15-tRNA, leading to the formation of archaeosine at position 15 in tRNAs. The protein is Archaeosine synthase subunit beta of Thermococcus kodakarensis (strain ATCC BAA-918 / JCM 12380 / KOD1) (Pyrococcus kodakaraensis (strain KOD1)).